The primary structure comprises 1456 residues: Leucine-rich repeat-containing protein 9 (1456 aa).

LRR repeat units follow at residues 53–78 (FHNLSSLTIVAQDIREISGLETCLQL), 97–119 (CRNLEKLYLYYNKISKIENLEKL), 120–141 (IKLEVLWLNHNMIKNIEGLQTL), 142–164 (KNLKDLNLAGNLVSSIGRCLDPN), 166–188 (QLEKLNLSGNQITSFKDLTNLTK), 190–212 (TRLKDLCLNDPQYKSNPVCQLCN), 224–248 (LQRLDTFDVSAKQIKELADSTAMKK), and 264–287 (NEELEKLNDRKCKLQKLPEERIKL). Residues 305 to 325 (SSKGQSDTTPEAEKPRNSEVV) form a disordered region. The stretch at 339 to 362 (LSALDDRVTFWNKKLHEIEAIYRT) is one LRR 9 repeat. Y525 carries the phosphotyrosine modification. LRR repeat units follow at residues 661-683 (KPRPKLISLDEKTIISLAKTNIY), 684-705 (SHIVNLNLHGNSLSKLRDLAKL), 706-727 (TGLRKLNISFNEFTCLDDVYHL), 729-748 (NLEYLDASHNHVITLEGFRG), 749-772 (LMKLKHLDLSWNQLKKTGEEINVL), 776-802 (TTSLLTLDIQHNPWQKPATLRLSVIGR), 806-833 (LTHLDGLVISEEETRAALKFISGTKITQ), 876-898 (YSKITALNLDGQHLFEITNLEKL), 899-920 (ENLKWASFSNNNLSKMEGLESC), 921-942 (VNLEELTLDGNCISKIEGITRL), 943-965 (TKLSRLSMNNNLLTGLEKHTFDN), 967-991 (LHLHSLSLENNRITSLSALQKTFTL), 993-1010 (ELYISNNYIAVNQEIYNL), 1013-1037 (LCNLVILDMYGNIIIWNQENYRFFV), 1082-1105 (FIQMQELNWTSSAIRTVDLIPVDH), 1106-1128 (FRNVSNVNLQNNNLTSFSGLIYL), 1129-1151 (PNVKVLCLNYNHIESIMPRLKPQ), 1191-1214 (MQSLEVLHLGYNGICNLVQLQLNR), 1215-1237 (LRNLKFLFLQGNEISQVEGLDNL), 1238-1260 (IVLQELVVDHNRIRAFNDTAFSK), 1262-1283 (SSLLMLHLEENRLRELSKLQSL), 1284-1307 (VKLEKLFLGYNKIQDITELEKLDV), and 1309-1335 (PSLRELTVYGNPICRKMVHRHVLIFRL).

This is Leucine-rich repeat-containing protein 9 (Lrrc9) from Mus musculus (Mouse).